Reading from the N-terminus, the 147-residue chain is Large ribosomal subunit protein bL9 (147 aa).

The protein belongs to the bacterial ribosomal protein bL9 family.

Binds to the 23S rRNA. This chain is Large ribosomal subunit protein bL9, found in Marinomonas sp. (strain MWYL1).